The chain runs to 282 residues: Glutamate--LysW ligase ArgX (282 aa).

ATP is bound by residues Lys87, Lys127, 131–137, and 167–178; these read GSWGRLV and QEYIQYKGRDIR. Residues 91–277 enclose the ATP-grasp domain; that stretch reads YSKLYREGIP…VAQKLVEYIK (187 aa). Arg192 contacts substrate. Asn202 is an ATP binding site. Substrate is bound at residue 203 to 204; the sequence is VA. Asp237, Glu250, and Asn252 together coordinate Mg(2+). 256–260 lines the substrate pocket; the sequence is EFKGF. Positions 259–260 match the GF motif that is essential for ArgX substrate specificity motif; it reads GF.

The protein belongs to the RimK family. LysX subfamily. Homotetramer. Interacts with LysW. The cofactor is Mg(2+).

The enzyme catalyses [amino-group carrier protein]-C-terminal-L-glutamate + L-glutamate + ATP = [amino-group carrier protein]-C-terminal-gamma-(L-glutamyl)-L-glutamate + ADP + phosphate + H(+). It functions in the pathway amino-acid biosynthesis; L-arginine biosynthesis. In terms of biological role, catalyzes the ATP-dependent formation of a covalent bond between the amino group of glutamate and the gamma-carboxyl group of the C-terminal glutamate residue in LysW. In Sulfurisphaera tokodaii (strain DSM 16993 / JCM 10545 / NBRC 100140 / 7) (Sulfolobus tokodaii), this protein is Glutamate--LysW ligase ArgX.